The sequence spans 485 residues: Ribulose bisphosphate carboxylase large chain (485 aa).

Substrate contacts are provided by asparagine 124 and threonine 174. Lysine 176 functions as the Proton acceptor in the catalytic mechanism. Lysine 178 is a binding site for substrate. Residues lysine 202, aspartate 204, and glutamate 205 each coordinate Mg(2+). At lysine 202 the chain carries N6-carboxylysine. The Proton acceptor role is filled by histidine 294. Substrate-binding residues include arginine 295, histidine 327, and serine 379.

This sequence belongs to the RuBisCO large chain family. Type I subfamily. In terms of assembly, heterohexadecamer of 8 large chains and 8 small chains. The cofactor is Mg(2+).

The catalysed reaction is 2 (2R)-3-phosphoglycerate + 2 H(+) = D-ribulose 1,5-bisphosphate + CO2 + H2O. It catalyses the reaction D-ribulose 1,5-bisphosphate + O2 = 2-phosphoglycolate + (2R)-3-phosphoglycerate + 2 H(+). Functionally, ruBisCO catalyzes two reactions: the carboxylation of D-ribulose 1,5-bisphosphate, the primary event in carbon dioxide fixation, as well as the oxidative fragmentation of the pentose substrate in the photorespiration process. Both reactions occur simultaneously and in competition at the same active site. The polypeptide is Ribulose bisphosphate carboxylase large chain (Rhodopseudomonas palustris (strain BisB18)).